We begin with the raw amino-acid sequence, 276 residues long: Probable endonuclease 4 (276 aa).

Zn(2+) is bound by residues His-66, His-106, Glu-141, Asp-175, His-178, His-210, Asp-223, His-225, and Glu-255.

It belongs to the AP endonuclease 2 family. The cofactor is Zn(2+).

The catalysed reaction is Endonucleolytic cleavage to 5'-phosphooligonucleotide end-products.. Its function is as follows. Endonuclease IV plays a role in DNA repair. It cleaves phosphodiester bonds at apurinic or apyrimidinic (AP) sites, generating a 3'-hydroxyl group and a 5'-terminal sugar phosphate. In Heliobacterium modesticaldum (strain ATCC 51547 / Ice1), this protein is Probable endonuclease 4.